The following is a 618-amino-acid chain: Phosphoenolpyruvate carboxykinase [GTP] (618 aa).

Substrate contacts are provided by residues R83 and 217 to 219 (YGG). 2 residues coordinate Mn(2+): K226 and H245. S267 provides a ligand contact to substrate. Position 268-273 (268-273 (MCGKTS)) interacts with GTP. C269 is a catalytic residue. D286 contacts Mn(2+). 381 to 383 (NAR) contacts substrate. R383 and R415 together coordinate GTP.

The protein belongs to the phosphoenolpyruvate carboxykinase [GTP] family. Requires Mn(2+) as cofactor.

It is found in the cytoplasm. It carries out the reaction oxaloacetate + GTP = phosphoenolpyruvate + GDP + CO2. It participates in carbohydrate biosynthesis; gluconeogenesis. Catalyzes the conversion of oxaloacetate (OAA) to phosphoenolpyruvate (PEP), the rate-limiting step in the metabolic pathway that produces glucose from lactate and other precursors derived from the citric acid cycle. The sequence is that of Phosphoenolpyruvate carboxykinase [GTP] from Pyrococcus abyssi (strain GE5 / Orsay).